A 158-amino-acid chain; its full sequence is uncharacterized protein (158 aa).

This is an uncharacterized protein from Acidianus convivator (ABV).